Reading from the N-terminus, the 154-residue chain is Myoglobin (154 aa).

The region spanning 2–148 is the Globin domain; it reads GLSDGEWQLV…FRKDMASNYK (147 aa). S4 is subject to Phosphoserine. H65 provides a ligand contact to nitrite. Position 65 (H65) interacts with O2. Phosphothreonine is present on T68. H94 contacts heme b.

The protein belongs to the globin family. Monomeric.

The protein resides in the cytoplasm. It is found in the sarcoplasm. It catalyses the reaction Fe(III)-heme b-[protein] + nitric oxide + H2O = Fe(II)-heme b-[protein] + nitrite + 2 H(+). The enzyme catalyses H2O2 + AH2 = A + 2 H2O. Functionally, monomeric heme protein which primary function is to store oxygen and facilitate its diffusion within muscle tissues. Reversibly binds oxygen through a pentacoordinated heme iron and enables its timely and efficient release as needed during periods of heightened demand. Depending on the oxidative conditions of tissues and cells, and in addition to its ability to bind oxygen, it also has a nitrite reductase activity whereby it regulates the production of bioactive nitric oxide. Under stress conditions, like hypoxia and anoxia, it also protects cells against reactive oxygen species thanks to its pseudoperoxidase activity. The protein is Myoglobin (MB) of Hylobates agilis (Agile gibbon).